Here is a 158-residue protein sequence, read N- to C-terminus: Style cell-cycle inhibitor 1-B (158 aa).

Basic and acidic residues-rich tracts occupy residues Met1 to Lys11 and Pro22 to Lys47. The segment at Met1–Leu88 is disordered. Basic residues-rich tracts occupy residues Lys48 to Cys58 and Gly67 to Ser81.

In terms of tissue distribution, specifically expressed in flowers pistils, especially in stigmas and styles. Barely detected in roots, stems, leaves, sepals, petals and stamen.

The protein resides in the nucleus. Component of the auxin signaling transduction pathway that regulates cell proliferation and differentiation during flowers stigmas and styles development. Involved in the regulation of auxin-related genes. In Nicotiana tabacum (Common tobacco), this protein is Style cell-cycle inhibitor 1-B.